Here is a 189-residue protein sequence, read N- to C-terminus: Peptidyl-tRNA hydrolase (189 aa).

Tyr-15 is a tRNA binding site. His-20 serves as the catalytic Proton acceptor. Residues Phe-64 and Asn-66 each coordinate tRNA.

Belongs to the PTH family. Monomer.

Its subcellular location is the cytoplasm. The enzyme catalyses an N-acyl-L-alpha-aminoacyl-tRNA + H2O = an N-acyl-L-amino acid + a tRNA + H(+). In terms of biological role, hydrolyzes ribosome-free peptidyl-tRNAs (with 1 or more amino acids incorporated), which drop off the ribosome during protein synthesis, or as a result of ribosome stalling. Catalyzes the release of premature peptidyl moieties from peptidyl-tRNA molecules trapped in stalled 50S ribosomal subunits, and thus maintains levels of free tRNAs and 50S ribosomes. The protein is Peptidyl-tRNA hydrolase of Persephonella marina (strain DSM 14350 / EX-H1).